Reading from the N-terminus, the 357-residue chain is (+)-eremophilene synthase (357 aa).

Mg(2+) contacts are provided by D100 and E105. Residues 100 to 105 carry the DDXXE motif motif; that stretch reads DDDFDE. Substrate is bound at residue R198. 2 residues coordinate Mg(2+): N244 and S248. A substrate-binding site is contributed by K251. D252 is a Mg(2+) binding site. Position 331–332 (331–332) interacts with substrate; the sequence is RY.

The protein belongs to the terpene synthase family. Mg(2+) is required as a cofactor.

The enzyme catalyses (2E,6E)-farnesyl diphosphate = (+)-eremophilene + diphosphate. It participates in secondary metabolite biosynthesis; terpenoid biosynthesis. Catalyzes the conversion of (2E,6E)-farnesyl diphosphate (FPP) to yield the bicyclic sesquiterpene eremophilene via a 1,10-cyclization, which requires the abstraction of the pyrophosphate from FPP to yield the (E,E)-germacradienyl cation. The only accepted substrate is farnesyl diphosphate (FPP). The protein is (+)-eremophilene synthase of Gibberella fujikuroi (strain CBS 195.34 / IMI 58289 / NRRL A-6831) (Bakanae and foot rot disease fungus).